We begin with the raw amino-acid sequence, 519 residues long: Cyclin-dependent kinase C-1 (519 aa).

One can recognise a Protein kinase domain in the interval 25 to 325 (FEKLEQIGEG…AQDALDAEYF (301 aa)). ATP contacts are provided by residues 31-39 (IGEGTYGQV) and K54. The residue at position 35 (T35) is a Phosphothreonine. The residue at position 36 (Y36) is a Phosphotyrosine. The Proton acceptor role is filled by D164. The residue at position 198 (T198) is a Phosphothreonine. A compositionally biased stretch (basic and acidic residues) spans 336–348 (SLPKYESSHEFQT). The segment at 336-519 (SLPKYESSHE…RNQQQYGNWQ (184 aa)) is disordered. A compositionally biased stretch (gly residues) spans 426 to 444 (GNQGGGYPNRGGQGGGGSY). The segment covering 445-454 (GNAPYPQQGR) has biased composition (low complexity). Gly residues-rich tracts occupy residues 464–483 (GMAG…GGGS) and 490–499 (GPYGPSGPGR). A compositionally biased stretch (polar residues) spans 505 to 519 (QQGGSRNQQQYGNWQ).

It belongs to the protein kinase superfamily. CMGC Ser/Thr protein kinase family. CDC2/CDKX subfamily.

It carries out the reaction L-seryl-[protein] + ATP = O-phospho-L-seryl-[protein] + ADP + H(+). The catalysed reaction is L-threonyl-[protein] + ATP = O-phospho-L-threonyl-[protein] + ADP + H(+). It catalyses the reaction [DNA-directed RNA polymerase] + ATP = phospho-[DNA-directed RNA polymerase] + ADP + H(+). This is Cyclin-dependent kinase C-1 (CDKC-1) from Oryza sativa subsp. japonica (Rice).